We begin with the raw amino-acid sequence, 86 residues long: Small ribosomal subunit protein bS20 (86 aa).

This sequence belongs to the bacterial ribosomal protein bS20 family.

Functionally, binds directly to 16S ribosomal RNA. The polypeptide is Small ribosomal subunit protein bS20 (Rhodococcus opacus (strain B4)).